Here is a 467-residue protein sequence, read N- to C-terminus: Glutamate--tRNA ligase (467 aa).

A 'HIGH' region motif is present at residues P9 to G19. A 'KMSKS' region motif is present at residues K241–R245. ATP is bound at residue K244.

It belongs to the class-I aminoacyl-tRNA synthetase family. Glutamate--tRNA ligase type 1 subfamily. As to quaternary structure, monomer.

It localises to the cytoplasm. The catalysed reaction is tRNA(Glu) + L-glutamate + ATP = L-glutamyl-tRNA(Glu) + AMP + diphosphate. In terms of biological role, catalyzes the attachment of glutamate to tRNA(Glu) in a two-step reaction: glutamate is first activated by ATP to form Glu-AMP and then transferred to the acceptor end of tRNA(Glu). This Methylobacillus flagellatus (strain ATCC 51484 / DSM 6875 / VKM B-1610 / KT) protein is Glutamate--tRNA ligase.